We begin with the raw amino-acid sequence, 216 residues long: Probable nicotinate-nucleotide adenylyltransferase (216 aa).

The protein belongs to the NadD family.

The catalysed reaction is nicotinate beta-D-ribonucleotide + ATP + H(+) = deamido-NAD(+) + diphosphate. It functions in the pathway cofactor biosynthesis; NAD(+) biosynthesis; deamido-NAD(+) from nicotinate D-ribonucleotide: step 1/1. Its function is as follows. Catalyzes the reversible adenylation of nicotinate mononucleotide (NaMN) to nicotinic acid adenine dinucleotide (NaAD). This Shewanella baltica (strain OS223) protein is Probable nicotinate-nucleotide adenylyltransferase.